Consider the following 67-residue polypeptide: UPF0434 protein Tcr_0959 (67 aa).

The protein belongs to the UPF0434 family.

The protein is UPF0434 protein Tcr_0959 of Hydrogenovibrio crunogenus (strain DSM 25203 / XCL-2) (Thiomicrospira crunogena).